A 164-amino-acid chain; its full sequence is UPF0225 protein Shewmr4_2054 (164 aa).

Belongs to the UPF0225 family.

In Shewanella sp. (strain MR-4), this protein is UPF0225 protein Shewmr4_2054.